A 213-amino-acid polypeptide reads, in one-letter code: uncharacterized protein (213 aa).

S-adenosyl-L-methionine contacts are provided by G53, E74, and D97.

This sequence belongs to the methyltransferase superfamily. YrrT family.

Functionally, could be a S-adenosyl-L-methionine-dependent methyltransferase. This is an uncharacterized protein from Bacillus subtilis (strain 168).